A 180-amino-acid chain; its full sequence is Large ribosomal subunit protein uL18m (180 aa).

This sequence belongs to the universal ribosomal protein uL18 family. Component of the mitochondrial ribosome large subunit (39S) which comprises a 16S rRNA and about 50 distinct proteins.

The protein resides in the mitochondrion. Functionally, together with thiosulfate sulfurtransferase (TST), acts as a mitochondrial import factor for the cytosolic 5S rRNA. The precursor form shows RNA chaperone activity; is able to fold the 5S rRNA into an import-competent conformation that is recognized by rhodanese (TST). Both the cytoplasmic and mitochondrial forms are able to bind to the helix IV-loop D in the gamma domain of the 5S rRNA. This Bos taurus (Bovine) protein is Large ribosomal subunit protein uL18m (MRPL18).